The primary structure comprises 95 residues: UPF0473 protein ABC1595 (95 aa).

Belongs to the UPF0473 family.

This chain is UPF0473 protein ABC1595, found in Shouchella clausii (strain KSM-K16) (Alkalihalobacillus clausii).